We begin with the raw amino-acid sequence, 337 residues long: Monoacylglycerol lipase ABHD6 (337 aa).

Residues M1–M8 are Extracellular-facing. The chain crosses the membrane as a helical; Signal-anchor for type II membrane protein span at residues F9–L29. Over W30–N337 the chain is Cytoplasmic. S148 functions as the Nucleophile in the catalytic mechanism. Active-site charge relay system residues include D278 and H306.

It belongs to the AB hydrolase superfamily.

The protein resides in the late endosome membrane. The protein localises to the lysosome membrane. It localises to the mitochondrion membrane. It catalyses the reaction Hydrolyzes glycerol monoesters of long-chain fatty acids.. The enzyme catalyses 1-octanoylglycerol + H2O = octanoate + glycerol + H(+). The catalysed reaction is 1-decanoylglycerol + H2O = decanoate + glycerol + H(+). It carries out the reaction 1-dodecanoylglycerol + H2O = dodecanoate + glycerol + H(+). It catalyses the reaction 1-tetradecanoylglycerol + H2O = tetradecanoate + glycerol + H(+). The enzyme catalyses 2-hexadecanoylglycerol + H2O = glycerol + hexadecanoate + H(+). The catalysed reaction is 2-(9Z-octadecenoyl)-glycerol + H2O = glycerol + (9Z)-octadecenoate + H(+). It carries out the reaction 1-(9Z-octadecenoyl)-glycerol + H2O = glycerol + (9Z)-octadecenoate + H(+). It catalyses the reaction 2-(9Z,12Z-octadecadienoyl)-glycerol + H2O = (9Z,12Z)-octadecadienoate + glycerol + H(+). The enzyme catalyses 2-(5Z,8Z,11Z,14Z-eicosatetraenoyl)-glycerol + H2O = glycerol + (5Z,8Z,11Z,14Z)-eicosatetraenoate + H(+). The catalysed reaction is 1-(5Z,8Z,11Z,14Z-eicosatetraenoyl)-glycerol + H2O = glycerol + (5Z,8Z,11Z,14Z)-eicosatetraenoate + H(+). It carries out the reaction 1-(9Z,12Z-octadecadienoyl)-glycerol + H2O = (9Z,12Z)-octadecadienoate + glycerol + H(+). It catalyses the reaction 3-(9Z-octadecenoyl)-sn-glycero-1-phospho-(3'-(9Z-octadecenoyl)-1'-sn-glycerol) + H2O = 3-(9Z-octadecenoyl)-sn-glycero-1-phospho-(1'-sn-glycerol) + (9Z)-octadecenoate + H(+). The enzyme catalyses (S,S)-2-(9Z-octadecenoyl)-sn-glycero-1-phospho-(2'-(9Z-octadecenoyl)-1'-sn-glycerol) + H2O = (S,S)-2-(9Z-octadecenoyl)-sn-glycero-1-phospho-(1'-sn-glycerol) + (9Z)-octadecenoate + H(+). The catalysed reaction is (R,R)-2-(9Z-octadecenoyl)-sn-glycero-3-phospho-(2'-(9Z-octadecenoyl)-3'-sn-glycerol) + H2O = (R,R)-2-(9Z-octadecenoyl)-sn-glycero-3-phospho-(3'-sn-glycerol) + (9Z)-octadecenoate + H(+). Its function is as follows. Lipase that preferentially hydrolysis medium-chain saturated monoacylglycerols including 2-arachidonoylglycerol. Through 2-arachidonoylglycerol degradation may regulate endocannabinoid signaling pathways. Also has a lysophosphatidyl lipase activity with a preference for lysophosphatidylglycerol among other lysophospholipids. Also able to degrade bis(monoacylglycero)phosphate (BMP) and constitutes the major enzyme for BMP catabolism. BMP, also known as lysobisphosphatidic acid, is enriched in late endosomes and lysosomes and plays a key role in the formation of intraluminal vesicles and in lipid sorting. The sequence is that of Monoacylglycerol lipase ABHD6 from Rattus norvegicus (Rat).